Here is a 300-residue protein sequence, read N- to C-terminus: Protoheme IX farnesyltransferase 1 (300 aa).

A run of 9 helical transmembrane segments spans residues Val28 to Leu48, Val54 to Ile74, Ala100 to Asn120, Leu122 to Leu142, Asn149 to Thr169, Ala176 to Ile196, Cys222 to Met242, Ser243 to Trp263, and Phe280 to Ala300.

This sequence belongs to the UbiA prenyltransferase family. Protoheme IX farnesyltransferase subfamily.

Its subcellular location is the cell inner membrane. It catalyses the reaction heme b + (2E,6E)-farnesyl diphosphate + H2O = Fe(II)-heme o + diphosphate. The protein operates within porphyrin-containing compound metabolism; heme O biosynthesis; heme O from protoheme: step 1/1. Its function is as follows. Converts heme B (protoheme IX) to heme O by substitution of the vinyl group on carbon 2 of heme B porphyrin ring with a hydroxyethyl farnesyl side group. The sequence is that of Protoheme IX farnesyltransferase 1 from Shewanella sp. (strain ANA-3).